A 230-amino-acid polypeptide reads, in one-letter code: Protein CWC15 homolog B (230 aa).

The disordered stretch occupies residues 1–126; that stretch reads MTTAARPTFE…DEDSDDDTAA (126 aa). The segment covering 22–34 has biased composition (polar residues); it reads DLSQLSKQYSSRD. Residues 52 to 84 show a composition bias toward basic and acidic residues; that stretch reads EEVRSRDFRRELEERERVAVRDKNRDRPTREHT. The span at 102–124 shows a compositional bias: acidic residues; it reads DADDPLTDEDADEDSDEDSDDDT. A coiled-coil region spans residues 121 to 165; sequence DDDTAALLAELEKIKKERAEEQVRKELEQKAEEERIRMENILSGN.

Belongs to the CWC15 family. In terms of assembly, identified in the spliceosome C complex. Component of the minor spliceosome, which splices U12-type introns.

The protein resides in the nucleus. Functionally, involved in pre-mRNA splicing as component of the spliceosome. The polypeptide is Protein CWC15 homolog B (cwc15-b) (Xenopus laevis (African clawed frog)).